The sequence spans 103 residues: Cystatin-A8 (103 aa).

Residues Met1–Glu20 form a disordered region. The Secondary area of contact motif lies at Gln51–Gly55.

Belongs to the cystatin family.

Its subcellular location is the cytoplasm. This is an intracellular thiol proteinase inhibitor. This chain is Cystatin-A8, found in Sus scrofa (Pig).